The primary structure comprises 355 residues: MASITLRRRDAVLLTAMLATETGNVAMNTLFKAATSKGLNSYTFLIYSYLIGSIVLLPSHIFSYRSRSLPSLSLSILCKIGVLGLLGSTYLITGFIGIEYSNPTLASAISNINPAITFILAIIFRMEKASFKEKSSVAKMVGTIVSLVGALVVVLYHGPRVFTPSSPPFPQLRQLLLPLSSSNSDWIIGGCLLAIKDTLVPVAFILQAHIMKLYPAPFTVSFFYFLIASILTSLIGIVAEKNNPSIWIIHFDITLVCIVVGGIFNPGYYAIHLWAVRNKGPVYLAIFRPLSILIAVIMGAIFLGDSFYLGSLVGGILISLGFYTVMWGKAKEGKTQFLSLSEETPLLDENIDDRI.

Transmembrane regions (helical) follow at residues 11–31, 42–62, 80–100, 104–124, 136–156, 186–206, 218–238, 244–264, 290–310, and 311–331; these read AVLL…NTLF, YTFL…SHIF, IGVL…GIEY, TLAS…AIIF, SVAK…VVLY, WIIG…AFIL, FTVS…IGIV, PSIW…GGIF, LSIL…FYLG, and SLVG…GKAK. The EamA domain maps to 29 to 154; it reads TLFKAATSKG…VSLVGALVVV (126 aa).

It belongs to the drug/metabolite transporter (DMT) superfamily. Plant drug/metabolite exporter (P-DME) (TC 2.A.7.4) family.

The protein resides in the membrane. This is WAT1-related protein At3g28130 from Arabidopsis thaliana (Mouse-ear cress).